The primary structure comprises 358 residues: uncharacterized protein (358 aa).

29–36 (GPINSGKT) is a binding site for ATP.

This sequence belongs to the archaeal ATPase family.

This is an uncharacterized protein from Methanocaldococcus jannaschii (strain ATCC 43067 / DSM 2661 / JAL-1 / JCM 10045 / NBRC 100440) (Methanococcus jannaschii).